A 535-amino-acid chain; its full sequence is Cytochrome P450 monooxygenase BOA7 (535 aa).

A helical transmembrane segment spans residues 20-37 (SIFLILGFFVLAAILIAW). N-linked (GlcNAc...) asparagine glycans are attached at residues N65, N148, N180, and N420. A heme-binding site is contributed by C478.

The protein belongs to the cytochrome P450 family. It depends on heme as a cofactor.

It localises to the membrane. It participates in polyketide biosynthesis. Cytochrome P450 monooxygenase; part of the gene cluster B that mediates the biosynthesis of botcinic acid and its botcinin derivatives, acetate-derived polyketides that contribute to virulence when combined with the sesquiterpene botrydial. Botcinic acid and its derivatives have been shown to induce chlorosis and necrosis during host plant infection, but also have antifungal activities. Two polyketide synthases, BOA6 and BOA9, are involved in the biosynthesis of botcinins. BOA6 mediates the formation of the per-methylated tetraketide core by condensation of four units of malonyl-CoA with one unit of acetyl-CoA, which would be methylated in activated methylene groups to yield a bicyclic acid intermediate that could then either be converted to botrylactone derivatives or lose the starter acetate unit through a retro-Claisen type C-C bond cleavage to yield botcinin derivatives. The second polyketide synthase, BOA9, is probably required for the biosynthesis of the tetraketide side chain of botcinins. The methyltransferase (MT) domain within BOA6 is probably responsible for the incorporation of four methyl groups. The trans-enoyl reductase BOA5 might take over the enoyl reductase function of BOA6 that misses an ER domain. The monooxygenases BOA2, BOA3 and BOA4 might be involved in further hydroxylations at C4, C5 and C8, whereas BOA7, close to BOA9, could potentially be involved in the hydroxylation at C4 in the side chain of botcinins. This chain is Cytochrome P450 monooxygenase BOA7, found in Botryotinia fuckeliana (strain B05.10) (Noble rot fungus).